Reading from the N-terminus, the 478-residue chain is PRAME family member 27 (478 aa).

The stretch at 17-40 is one LRR 1 repeat; the sequence is RSLLRDQALAMSTLEELPTELFPP. An LRR 1; degenerate repeat occupies 99 to 126; that stretch reads RWKLQVLDLQDVCENFWMVWSEAMARGS. An LRR 2; degenerate repeat occupies 181–205; that stretch reads HLCCKKLKILGMPFRNIRSILKMVN. The stretch at 206–232 is one LRR 3; degenerate repeat; that stretch reads LDCIQEVEVNCKWVLPILTQFTPYLGH. An LRR 4; degenerate repeat occupies 233–268; that stretch reads MRNLQKLVLSHMDVSRYVSPEQKKEIVTQFTTQFLK. 5 LRR repeats span residues 269-294, 295-326, 327-348, 351-378, and 379-403; these read LHCL…LSCL, KTSL…SQLK, TLDL…ILLE, AATL…ALSR, and CFEL…LLSH.

It belongs to the PRAME family.

The protein is PRAME family member 27 of Homo sapiens (Human).